The sequence spans 156 residues: Ribosomal RNA large subunit methyltransferase H (156 aa).

S-adenosyl-L-methionine-binding positions include L73, G104, and 123–128 (LSALTL).

The protein belongs to the RNA methyltransferase RlmH family. In terms of assembly, homodimer.

The protein localises to the cytoplasm. It catalyses the reaction pseudouridine(1915) in 23S rRNA + S-adenosyl-L-methionine = N(3)-methylpseudouridine(1915) in 23S rRNA + S-adenosyl-L-homocysteine + H(+). In terms of biological role, specifically methylates the pseudouridine at position 1915 (m3Psi1915) in 23S rRNA. This is Ribosomal RNA large subunit methyltransferase H from Erwinia tasmaniensis (strain DSM 17950 / CFBP 7177 / CIP 109463 / NCPPB 4357 / Et1/99).